The sequence spans 460 residues: Argininosuccinate lyase (460 aa).

The protein belongs to the lyase 1 family. Argininosuccinate lyase subfamily.

It is found in the cytoplasm. It catalyses the reaction 2-(N(omega)-L-arginino)succinate = fumarate + L-arginine. It functions in the pathway amino-acid biosynthesis; L-arginine biosynthesis; L-arginine from L-ornithine and carbamoyl phosphate: step 3/3. The protein is Argininosuccinate lyase of Streptococcus sanguinis (strain SK36).